We begin with the raw amino-acid sequence, 446 residues long: 3-phosphoshikimate 1-carboxyvinyltransferase (446 aa).

3-phosphoshikimate contacts are provided by Lys-26, Ser-27, and Arg-31. Lys-26 lines the phosphoenolpyruvate pocket. 2 residues coordinate phosphoenolpyruvate: Gly-100 and Arg-128. Positions 171, 172, 173, 200, 315, and 344 each coordinate 3-phosphoshikimate. Residue Gln-173 coordinates phosphoenolpyruvate. Catalysis depends on Glu-315, which acts as the Proton acceptor. Positions 348, 389, and 414 each coordinate phosphoenolpyruvate.

It belongs to the EPSP synthase family. In terms of assembly, monomer.

The protein localises to the cytoplasm. It carries out the reaction 3-phosphoshikimate + phosphoenolpyruvate = 5-O-(1-carboxyvinyl)-3-phosphoshikimate + phosphate. It functions in the pathway metabolic intermediate biosynthesis; chorismate biosynthesis; chorismate from D-erythrose 4-phosphate and phosphoenolpyruvate: step 6/7. Its function is as follows. Catalyzes the transfer of the enolpyruvyl moiety of phosphoenolpyruvate (PEP) to the 5-hydroxyl of shikimate-3-phosphate (S3P) to produce enolpyruvyl shikimate-3-phosphate and inorganic phosphate. In Mycolicibacterium gilvum (strain PYR-GCK) (Mycobacterium gilvum (strain PYR-GCK)), this protein is 3-phosphoshikimate 1-carboxyvinyltransferase.